The sequence spans 368 residues: 1-aminocyclopropane-1-carboxylate oxidase (368 aa).

The Fe2OG dioxygenase domain maps to 177 to 307 (PFILMGLLHY…RFSIPFFLDP (131 aa)). Residues 191 to 226 (HQEQEEEQEDDESNNGGKKSPNPDESKKPEVEKFGT) are disordered. The span at 194–203 (QEEEQEDDES) shows a compositional bias: acidic residues. Residues 211 to 223 (PNPDESKKPEVEK) show a composition bias toward basic and acidic residues. Fe cation is bound by residues H229, D231, and H287. R298 serves as a coordination point for 2-oxoglutarate.

The protein belongs to the iron/ascorbate-dependent oxidoreductase family. Fe(2+) serves as cofactor.

The enzyme catalyses 1-aminocyclopropane-1-carboxylate + L-ascorbate + O2 = ethene + L-dehydroascorbate + hydrogen cyanide + CO2 + 2 H2O. It participates in alkene biosynthesis; ethylene biosynthesis via S-adenosyl-L-methionine; ethylene from S-adenosyl-L-methionine: step 2/2. Its function is as follows. Involved in ethylene biosynthesis. Overexpression induces overproduction of ethylene. The polypeptide is 1-aminocyclopropane-1-carboxylate oxidase (aco) (Dictyostelium discoideum (Social amoeba)).